The sequence spans 381 residues: Erythronate-4-phosphate dehydrogenase (381 aa).

The substrate site is built by S45 and T66. Residues D146, T174, 205-207 (ASR), and D231 each bind NAD(+). The active site involves R207. E236 is a catalytic residue. Catalysis depends on H253, which acts as the Proton donor. G256 contacts NAD(+). Y257 contributes to the substrate binding site.

The protein belongs to the D-isomer specific 2-hydroxyacid dehydrogenase family. PdxB subfamily. In terms of assembly, homodimer.

The protein resides in the cytoplasm. It carries out the reaction 4-phospho-D-erythronate + NAD(+) = (R)-3-hydroxy-2-oxo-4-phosphooxybutanoate + NADH + H(+). It functions in the pathway cofactor biosynthesis; pyridoxine 5'-phosphate biosynthesis; pyridoxine 5'-phosphate from D-erythrose 4-phosphate: step 2/5. Its function is as follows. Catalyzes the oxidation of erythronate-4-phosphate to 3-hydroxy-2-oxo-4-phosphonooxybutanoate. This Stutzerimonas stutzeri (strain A1501) (Pseudomonas stutzeri) protein is Erythronate-4-phosphate dehydrogenase.